A 134-amino-acid chain; its full sequence is Secreted RxLR effector protein 1 (134 aa).

A signal peptide spans 1–22; sequence MFCRSPLVAVILLVLATHIVLA. A disordered region spans residues 32-60; the sequence is SETVPSDSSQTTRKSTRRTTSVDNKRRLR. Low complexity predominate over residues 37-52; sequence SDSSQTTRKSTRRTTS. Residues 57–79 carry the RxLR-dEER motif; that stretch reads RRLRQQIMGKDGPVVNDVHAEER.

Belongs to the RxLR effector family.

It is found in the secreted. The protein localises to the host nucleus. Its function is as follows. Effector that acts as a broad suppressor of cell death to interrupt plant immunity. Inhibits cell death induced by cell death-inducing proteins, including the PAMP elicitor INF1 from P.infestans. This is Secreted RxLR effector protein 1 from Plasmopara viticola (Downy mildew of grapevine).